Here is a 157-residue protein sequence, read N- to C-terminus: MSKKVTETVEQLVTPILDEMGLELVDIEYVKEGKNWFLRVFIDSDDGVDIEQCGAVSEKLSEKLDEVDPIPHNYFLEVSSPGAERPLKKAKDFAKAIGKNVYIKTYEPIEGEKQFEGELTAFDGTTVTLLVKDRGRQKTVAIPYEKVASARLAVIFF.

It belongs to the RimP family.

Its subcellular location is the cytoplasm. Required for maturation of 30S ribosomal subunits. The chain is Ribosome maturation factor RimP from Geobacillus kaustophilus (strain HTA426).